We begin with the raw amino-acid sequence, 490 residues long: MRDLFAPWGLDVPERALREMTLDSRIAAAGDLFVAVVGHQTDGRRYIPQAIAQGVAAIVAEADGVAPDVSVAEIHGVPVIYLRNLNQHLSTLAGQFYHQPGAALRLVGVTGTNGKTTTTQLLAQWSQALGETSAVMGTVGNGLLGQVIPTENTTGSAVDIQHLLRNLVDQGATFAAMEVSSHGLIQDRVAALSFAAVVFTNLSRDHLDYHGNMTSYEAAKWLLFSTHQSEHKIINADDDVGRRWLSQLPQAVAVSMAGNVPKGWNGPWLSANKVIYHDNGASIAFDSSWGEGELESRLMGAFNVSNLLVALATLLVQGYPMAQLLAAAPHLQPVCGRMEVFNAPGKPTVVVDYAHTPDALEKALAAARLHCTGKLWCVFGCGGDRDKGKRPLMGGIAEQLADCVVVTDDNPRSEEPQAIVADILSGLLDAGRVQAIHGRAEAVTSAIMQAKEDDVVLIAGKGHEDYQLVGNRRLDYSDRVTVARLLGGQA.

Residues Leu22, Ser24, and 39–41 (HQT) contribute to the UDP-N-acetyl-alpha-D-muramoyl-L-alanyl-D-glutamate site. ATP is bound at residue 111-117 (GTNGKTT). UDP-N-acetyl-alpha-D-muramoyl-L-alanyl-D-glutamate contacts are provided by residues Asn152, 153–154 (TT), Ser180, Gln186, and Arg188. Lys220 carries the post-translational modification N6-carboxylysine. Residues Arg385, 409–412 (DNPR), Gly460, and Glu464 contribute to the meso-2,6-diaminopimelate site. The Meso-diaminopimelate recognition motif motif lies at 409 to 412 (DNPR).

The protein belongs to the MurCDEF family. MurE subfamily. Mg(2+) is required as a cofactor. Carboxylation is probably crucial for Mg(2+) binding and, consequently, for the gamma-phosphate positioning of ATP.

It is found in the cytoplasm. It catalyses the reaction UDP-N-acetyl-alpha-D-muramoyl-L-alanyl-D-glutamate + meso-2,6-diaminopimelate + ATP = UDP-N-acetyl-alpha-D-muramoyl-L-alanyl-gamma-D-glutamyl-meso-2,6-diaminopimelate + ADP + phosphate + H(+). The protein operates within cell wall biogenesis; peptidoglycan biosynthesis. In terms of biological role, catalyzes the addition of meso-diaminopimelic acid to the nucleotide precursor UDP-N-acetylmuramoyl-L-alanyl-D-glutamate (UMAG) in the biosynthesis of bacterial cell-wall peptidoglycan. In Yersinia pestis, this protein is UDP-N-acetylmuramoyl-L-alanyl-D-glutamate--2,6-diaminopimelate ligase.